Consider the following 162-residue polypeptide: MLKITIIAACAENLCIGAGNAMPWHIPEDFAFFKVYTLGKPVIMGRKTWESLPVKPLPGRRNIVISRQADYCAAGAETVASLEVALALCAGAEEAVIMGGAQIYGQAMPLATDLRITEVDLSVEGDAFFPEIDRTHWREAERTERRVSSKGVAYTFVHYLGK.

The DHFR domain occupies 3–161 (KITIIAACAE…VAYTFVHYLG (159 aa)). 7 to 9 (IAA) is a binding site for substrate. Residues 8–9 (AA) and 16–21 (IGAGNA) contribute to the NADP(+) site. Asp-29 is a substrate binding site. 45-48 (GRKT) is an NADP(+) binding site. A substrate-binding site is contributed by Arg-60. NADP(+) contacts are provided by residues 65–68 (ISRQ) and 98–103 (MGGAQI). Thr-117 is a substrate binding site.

The protein belongs to the dihydrofolate reductase family.

It catalyses the reaction (6S)-5,6,7,8-tetrahydrofolate + NADP(+) = 7,8-dihydrofolate + NADPH + H(+). The protein operates within cofactor biosynthesis; tetrahydrofolate biosynthesis; 5,6,7,8-tetrahydrofolate from 7,8-dihydrofolate: step 1/1. Key enzyme in folate metabolism. Catalyzes an essential reaction for de novo glycine and purine synthesis, and for DNA precursor synthesis. This Neisseria gonorrhoeae protein is Dihydrofolate reductase (folA).